A 1351-amino-acid chain; its full sequence is MSKKDSKNSPKKSKDTNSDESSSSNAETSSDKSITYLKLRDDSKTEIKYIYHMSDIHIRKLQRHDEYKEVFDRTYKILKSEITSNDSIIVLTGDIMHMKTEMSPEIIDITSNFFKTLNEIAPVILIPGNHDCNLSNKNRLDALSPIIENTYKFPDLFYLKKSGLYQFYNIVFGVTSVFEDDLVTADKITKEHWNKIKQPNKFKIALYHGPVHNAKTDVGYRMNNEQLLAEDFKGYHYVMLGDIHRFQYMNENKTIAYSGSLIQQSYGESLHGHGILKWSLVEKSSELIEVRNDYGYCTVKIIDGQMIETKIPKKPRVRFILENTNQIQYQEVINNLEKQYLIQEIVKESNLKTKYNNSSPSKKDKPTAYATQETMVNSYMEKRGLDEKTTKGIIELHKKIYQKILANNKEKVVDVMHNSTKTQKWRLLELRFSNALSYGKDNVIDFRNYDPNKIIGIFAPNHYGKSAVLDIILFCLFDKCSRGDRRDILNKNEKNMSCSILLSIGSQQYYIERIGVRNKNGLTVKIDVNFYSITTNEKGKETMTKLNGLDKNETNRKIAELIGDYNDYLTTCFSLQTKNSNFIDMTQLQKKEYLNDILKLNVFEECHNYAKDKLKDLTGQLKVLEQKIGQKSLDDFKSSVRKITEEMSVINSEIKWIGNNLLPQVDIVINKNPVVPRIYYNELLDYDLTDVKSIIRTQTNILKQLSDKQNNNEIGTISVEITSKKQQLNEISTKFDEEKIKLETQLGELRTNKENLLKKLIKIPKINSDEIETHKKTVQECEDRINIIDKVFEEHENDELTDKMSRIDELKALISRLRKSLAVTNNNDYSHLDKLYEELINVDTKYRQCISNVLNPKKILNQQEKNHLSEIVKIKRYFTDNLIDNNGLLGDYDKGKSNLNDELIEKIMSKNNQIIDQENEWFEQADEYLKQDNSGIIDVDDIIKQRSKIQEQIRKILLNILNKKENQIIESKINKAQTELDALAEFTGTKKEIDNLVQEKKLLKDKIVFLKEKISQNELAVQNQKSNDEIKKQINEIESKIDQITCIIKDNTSEINTLKQYISEKESIIKKHQKQIDQTNKLNHHYKLLDKYYLEYTNWNHKNSTREKWLKTRTEMNDKLNDLNKNLDKKQVELDMFKKEVEQYIESRKEFDDKSTEVNLYQHYVQIMNCNGLPYEMLKTYLPLIESDVNEILHSMVNFNIEFMFYDDSKLEEQKTKQLKSNMGSVDINICYHNMKPYNVQLASGFERFIIGLAIRMTLCQISLTSKPNFLIIDEGWSCLDSDNLSNVGTIMNYIKTQYEHVIIISHLDELKSQADYIISIDKVKGYSRIIENKKTIKKIINKKPNKIIEL.

Residues 1–17 (MSKKDSKNSPKKSKDTN) are compositionally biased toward basic and acidic residues. Residues 1 to 31 (MSKKDSKNSPKKSKDTNSDESSSSNAETSSD) are disordered. Over residues 19–31 (DESSSSNAETSSD) the composition is skewed to low complexity.

This is an uncharacterized protein from Acanthamoeba polyphaga mimivirus (APMV).